Reading from the N-terminus, the 67-residue chain is Large ribosomal subunit protein uL29 (67 aa).

It belongs to the universal ribosomal protein uL29 family.

The polypeptide is Large ribosomal subunit protein uL29 (Sorangium cellulosum (strain So ce56) (Polyangium cellulosum (strain So ce56))).